Consider the following 177-residue polypeptide: Large ribosomal subunit protein uL6 (177 aa).

The protein belongs to the universal ribosomal protein uL6 family. In terms of assembly, part of the 50S ribosomal subunit.

This protein binds to the 23S rRNA, and is important in its secondary structure. It is located near the subunit interface in the base of the L7/L12 stalk, and near the tRNA binding site of the peptidyltransferase center. This Methylorubrum populi (strain ATCC BAA-705 / NCIMB 13946 / BJ001) (Methylobacterium populi) protein is Large ribosomal subunit protein uL6.